We begin with the raw amino-acid sequence, 598 residues long: MQQSHIRNFSIIAHIDHGKSTLSDRLIQHCGGLTDREMAEQVLDSMDLEKERGITIKAQSVTLNYEARDGETYQLNFIDTPGHVDFTYEVSRSLAACEGALLVVDAGQGVEAQTLANCYTAIEMDMEVVPVLNKIDLPQAEPDRVAEEIEDIVGIDALDAVRCSAKTGIGIEDVLEVIVNKIPPPEGDREAPLKALIIDSWFDNYQGVVSLVRIVEGQLNKKDKIQIMSNGQTHQVDKIGVFTPKPLDTGILRAGEVGFIIAGIKDIQGAPVGDTITLAREPADAMLPGFKKVKPQVYAGIFPISSDDYEDFRDALAKLSLNDASLFYEPESSAALGFGFRIGFLGMLHMEIIQERLEREYDLGLITTAPTVIYEVETTKGETLTVDSPAKLPPVNDIAEIREPMVEANILVPQEYLGNVITLCVEKRGMQTNMTYHGKQVAVTYELPMAEVVLDFFDRLKSTSRGFASLDYNFKRFQTSDMVRVDILINGERVDALAVITHRENSQGRGRELVEKLRELIPRQMFDIAIQAAIGNHVVARSTVKQLRKNVIAKCYGGDVSRKKKLLQKQKEGKKRMKQVGNVELPQDAFLAVLKVGK.

Residues 4-186 (SHIRNFSIIA…VIVNKIPPPE (183 aa)) form the tr-type G domain. Residues 16-21 (DHGKST) and 133-136 (NKID) each bind GTP.

It belongs to the TRAFAC class translation factor GTPase superfamily. Classic translation factor GTPase family. LepA subfamily.

It localises to the cell inner membrane. The catalysed reaction is GTP + H2O = GDP + phosphate + H(+). In terms of biological role, required for accurate and efficient protein synthesis under certain stress conditions. May act as a fidelity factor of the translation reaction, by catalyzing a one-codon backward translocation of tRNAs on improperly translocated ribosomes. Back-translocation proceeds from a post-translocation (POST) complex to a pre-translocation (PRE) complex, thus giving elongation factor G a second chance to translocate the tRNAs correctly. Binds to ribosomes in a GTP-dependent manner. The protein is Elongation factor 4 of Alteromonas mediterranea (strain DSM 17117 / CIP 110805 / LMG 28347 / Deep ecotype).